A 520-amino-acid polypeptide reads, in one-letter code: CBL-interacting serine/threonine-protein kinase 18 (520 aa).

Disordered regions lie at residues 1-29 (MAQA…PHPK) and 48-67 (TDKD…SPRN). The segment covering 17 to 29 (PDPPPPPPPPHPK) has biased composition (pro residues). Over residues 55-66 (SPQSPRSPRSPR) the composition is skewed to low complexity. The Protein kinase domain maps to 74 to 328 (YELGKLLGHG…IPEIMKNRWF (255 aa)). Residues 80–88 (LGHGTFAKV) and Lys-103 contribute to the ATP site. Asp-196 serves as the catalytic Proton acceptor. The activation loop stretch occupies residues 214-243 (DFGLSAVAEQLRQDGLCHTFCGTPAYIAPE). Phosphoserine is present on Ser-218. Thr-232 carries the phosphothreonine modification. The interval 349-368 (EDEEEEASSSGRSSTVSESD) is disordered. Positions 356 to 366 (SSSGRSSTVSE) are enriched in low complexity. Positions 382–406 (PRPSSLNAFDIISFSSGFDLSGLFE) constitute an NAF domain. The PPI stretch occupies residues 410–439 (GEGTRFVSGAPVSKIISKLEEIAKIVSFTV).

It belongs to the protein kinase superfamily. CAMK Ser/Thr protein kinase family. SNF1 subfamily. In terms of assembly, interacts with CBL1 and CBL9. It depends on Mn(2+) as a cofactor.

It catalyses the reaction L-seryl-[protein] + ATP = O-phospho-L-seryl-[protein] + ADP + H(+). The enzyme catalyses L-threonyl-[protein] + ATP = O-phospho-L-threonyl-[protein] + ADP + H(+). Its function is as follows. CIPK serine-threonine protein kinases interact with CBL proteins. Binding of a CBL protein to the regulatory NAF domain of CIPK protein lead to the activation of the kinase in a calcium-dependent manner. The sequence is that of CBL-interacting serine/threonine-protein kinase 18 (CIPK18) from Arabidopsis thaliana (Mouse-ear cress).